Reading from the N-terminus, the 245-residue chain is 1-(5-phosphoribosyl)-5-[(5-phosphoribosylamino)methylideneamino] imidazole-4-carboxamide isomerase (245 aa).

Residue aspartate 7 is the Proton acceptor of the active site. The active-site Proton donor is the aspartate 129.

The protein belongs to the HisA/HisF family.

The protein localises to the cytoplasm. The enzyme catalyses 1-(5-phospho-beta-D-ribosyl)-5-[(5-phospho-beta-D-ribosylamino)methylideneamino]imidazole-4-carboxamide = 5-[(5-phospho-1-deoxy-D-ribulos-1-ylimino)methylamino]-1-(5-phospho-beta-D-ribosyl)imidazole-4-carboxamide. Its pathway is amino-acid biosynthesis; L-histidine biosynthesis; L-histidine from 5-phospho-alpha-D-ribose 1-diphosphate: step 4/9. The sequence is that of 1-(5-phosphoribosyl)-5-[(5-phosphoribosylamino)methylideneamino] imidazole-4-carboxamide isomerase from Proteus mirabilis (strain HI4320).